The following is a 307-amino-acid chain: Haloalkane dehalogenase (307 aa).

Residues 34–158 (PVLFLHGNPT…FQAFRTADVG (125 aa)) form the AB hydrolase-1 domain. The active-site Nucleophile is the Asp-106. Catalysis depends on Glu-130, which acts as the Proton donor. The Proton acceptor role is filled by His-272.

Belongs to the haloalkane dehalogenase family. Type 2 subfamily. In terms of assembly, monomer.

It carries out the reaction 1-haloalkane + H2O = a halide anion + a primary alcohol + H(+). It functions in the pathway xenobiotic degradation; 1,2-dibromoethane degradation. In terms of biological role, catalyzes hydrolytic cleavage of carbon-halogen bonds in halogenated aliphatic compounds, leading to the formation of the corresponding primary alcohols, halide ions and protons. Has a broad substrate specificity, which includes mono- and di-chlorinated and brominated alkanes. The highest activity was found with 1,2-dibromoethane, whereas low activity was measured with the analog 1,2-dichloroethane. The polypeptide is Haloalkane dehalogenase (dhaAF) (Mycobacterium sp. (strain GP1)).